Here is a 326-residue protein sequence, read N- to C-terminus: Glutaminase 2 (326 aa).

Residues S73, N125, E169, N176, Y200, Y252, and V270 each contribute to the substrate site.

It belongs to the glutaminase family. As to quaternary structure, homotetramer.

The catalysed reaction is L-glutamine + H2O = L-glutamate + NH4(+). In Bacillus anthracis, this protein is Glutaminase 2.